A 1055-amino-acid chain; its full sequence is Putative helicase/primase complex protein (1055 aa).

It belongs to the asfivirus F1055L family.

Functionally, may be involved in DNA replication. This Ornithodoros (relapsing fever ticks) protein is Putative helicase/primase complex protein.